The sequence spans 407 residues: Cytochrome P450 NovI (407 aa).

Cys357 is a heme binding site.

Belongs to the cytochrome P450 family. It depends on heme as a cofactor.

It functions in the pathway antibiotic biosynthesis; novobiocin biosynthesis. In terms of biological role, together with NovH, involved in the formation of a beta-OH-Tyr intermediate in the novobiocin biosynthesis pathway, an aminocoumarin family antibiotic that targets bacterial DNA gyrases. Acts as a cytochrome P450-type monooxygenase with specificity for the tyrosyl-S-NovH acyl enzyme (L-Tyr-S-NovH) to form the beta-OH-Tyr intermediate (L-beta-OH-Tyr-S-NovH). In Streptomyces niveus (Streptomyces spheroides), this protein is Cytochrome P450 NovI (novI).